Reading from the N-terminus, the 223-residue chain is Family of serine hydrolases 2 (223 aa).

Active-site charge relay system residues include Ser-110, Asp-174, and His-203.

It belongs to the AB hydrolase 3 family.

The protein resides in the cytoplasm. Serine hydrolase of unknown specificity. The polypeptide is Family of serine hydrolases 2 (FSH2) (Saccharomyces cerevisiae (strain ATCC 204508 / S288c) (Baker's yeast)).